The chain runs to 1211 residues: Transient receptor potential cation channel subfamily A member 1 homolog (1211 aa).

The Cytoplasmic segment spans residues 1 to 811 (MSKKSLGLDV…LKYKWNRLGR (811 aa)). ANK repeat units follow at residues 49 to 79 (NLRS…AVNA), 83 to 112 (DFMT…LPNT), 116 to 169 (EGDT…EIDP), 173 to 202 (YQLT…DVDA), 206 to 235 (NKMT…NVTK), 239 to 270 (RLNT…AIKA), 277 to 306 (EKKT…KNSC), 311 to 340 (REKE…NKNE), 344 to 374 (VKAV…NIDV), 378 to 407 (QGLT…NLTI), 411 to 440 (DERT…KKNK), 473 to 502 (DQNT…SITQ), 506 to 535 (DEET…RLLL), 540 to 569 (MGNS…DKEA), 573 to 602 (YQKT…QIES), 605 to 634 (DTKT…TIDR), and 638 to 669 (EGKT…NLMI). Residues 812–832 (PMYYFALFMYLVFIVSLTQYV) traverse the membrane as a helical segment. At 833–870 (RHTKAPYNVWNEESYYDSEYFDENETCPQINTTKPDVV) the chain is on the extracellular side. N-linked (GlcNAc...) asparagine glycans are attached at residues asparagine 856 and asparagine 863. Residues 871-891 (WKIIIQTLAVCQILVECFQLF) traverse the membrane as a helical segment. Over 892–894 (QRK) the chain is Cytoplasmic. A helical membrane pass occupies residues 895–915 (FAYLVNWENWIDCFIYSTALI). The Extracellular segment spans residues 916–932 (TVYDFSECSATSGVRQN). Residues 933-953 (WQWILAALCIFFGWINLLFMI) form a helical membrane-spanning segment. Over 954–975 (RKMPRFGIFVVMFVDIVKTFFR) the chain is Cytoplasmic. The chain crosses the membrane as a helical span at residues 976–996 (FFPVFVLFIIAFSSSFYVILQ). At 997–1004 (NRPEFSTI) the chain is on the extracellular side. Residues 1005–1025 (FMSPLKTTVMMIGEFEFTGIF) constitute an intramembrane region (pore-forming). Over 1026 to 1048 (HGDETTHAEKMFGPAHTAVACAL) the chain is Extracellular. A helical transmembrane segment spans residues 1049-1069 (FFFFCIIMTILLMNLLVGLAV). Residues 1070 to 1193 (DDIKGVQEKA…EKQVRLEAII (124 aa)) are Cytoplasmic-facing. Residues 1149-1191 (EMYEREAEFTSEMTQKLQNQAAKLKNIQENIDVMYEKQVRLEA) adopt a coiled-coil conformation.

It belongs to the transient receptor (TC 1.A.4) family. As to quaternary structure, homotetramer. Expressed in many sensory neurons, including OLQ and IL1 neurons.

Its subcellular location is the cell membrane. Receptor-activated non-selective cation channel involved in the nose-touch response and foraging behavior. Contributes to the neural responses of sensory neurons to touch, particularly after repeated mechanical stimulation. Has no apparent role in thermosensory or chemosensory behaviors. The chain is Transient receptor potential cation channel subfamily A member 1 homolog (trpa-1) from Caenorhabditis elegans.